The following is a 619-amino-acid chain: Dihydroxy-acid dehydratase 1 (619 aa).

Residue Asp81 participates in Mg(2+) binding. Cys122 is a [2Fe-2S] cluster binding site. Residues Asp123 and Lys124 each coordinate Mg(2+). At Lys124 the chain carries N6-carboxylysine. Residue Cys198 participates in [2Fe-2S] cluster binding. Glu494 contacts Mg(2+). Ser520 acts as the Proton acceptor in catalysis.

This sequence belongs to the IlvD/Edd family. Homodimer. [2Fe-2S] cluster is required as a cofactor. Mg(2+) serves as cofactor.

The catalysed reaction is (2R)-2,3-dihydroxy-3-methylbutanoate = 3-methyl-2-oxobutanoate + H2O. It carries out the reaction (2R,3R)-2,3-dihydroxy-3-methylpentanoate = (S)-3-methyl-2-oxopentanoate + H2O. The protein operates within amino-acid biosynthesis; L-isoleucine biosynthesis; L-isoleucine from 2-oxobutanoate: step 3/4. It functions in the pathway amino-acid biosynthesis; L-valine biosynthesis; L-valine from pyruvate: step 3/4. Functions in the biosynthesis of branched-chain amino acids. Catalyzes the dehydration of (2R,3R)-2,3-dihydroxy-3-methylpentanoate (2,3-dihydroxy-3-methylvalerate) into 2-oxo-3-methylpentanoate (2-oxo-3-methylvalerate) and of (2R)-2,3-dihydroxy-3-methylbutanoate (2,3-dihydroxyisovalerate) into 2-oxo-3-methylbutanoate (2-oxoisovalerate), the penultimate precursor to L-isoleucine and L-valine, respectively. The polypeptide is Dihydroxy-acid dehydratase 1 (Bordetella pertussis (strain Tohama I / ATCC BAA-589 / NCTC 13251)).